The sequence spans 554 residues: Valerianol synthase TPS1G (554 aa).

Mg(2+)-binding residues include D307 and D311. A DDXXD motif motif is present at residues 326–330 (VQRWD). 3 residues coordinate Mg(2+): D452, S456, and E460.

It belongs to the terpene synthase family. The cofactor is Mg(2+).

The enzyme catalyses (2E,6E)-farnesyl diphosphate + H2O = valerianol + diphosphate. It functions in the pathway secondary metabolite biosynthesis; terpenoid biosynthesis. Functionally, terpene synthase that catalyzes the biosynthesis of the terpene valerianol, which is a volatile compound of floral scent. The sequence is that of Valerianol synthase TPS1G from Camellia hiemalis (Camellia).